Here is a 490-residue protein sequence, read N- to C-terminus: Cytochrome P450 71A25 (490 aa).

A helical transmembrane segment spans residues 1-21 (MMMMIILLWSIIFMTILFLKK). Cys431 provides a ligand contact to heme.

It belongs to the cytochrome P450 family. The cofactor is heme.

The protein resides in the membrane. The sequence is that of Cytochrome P450 71A25 (CYP71A25) from Arabidopsis thaliana (Mouse-ear cress).